Reading from the N-terminus, the 100-residue chain is Aspartyl/glutamyl-tRNA(Asn/Gln) amidotransferase subunit C (100 aa).

The protein belongs to the GatC family. As to quaternary structure, heterotrimer of A, B and C subunits.

It carries out the reaction L-glutamyl-tRNA(Gln) + L-glutamine + ATP + H2O = L-glutaminyl-tRNA(Gln) + L-glutamate + ADP + phosphate + H(+). The catalysed reaction is L-aspartyl-tRNA(Asn) + L-glutamine + ATP + H2O = L-asparaginyl-tRNA(Asn) + L-glutamate + ADP + phosphate + 2 H(+). In terms of biological role, allows the formation of correctly charged Asn-tRNA(Asn) or Gln-tRNA(Gln) through the transamidation of misacylated Asp-tRNA(Asn) or Glu-tRNA(Gln) in organisms which lack either or both of asparaginyl-tRNA or glutaminyl-tRNA synthetases. The reaction takes place in the presence of glutamine and ATP through an activated phospho-Asp-tRNA(Asn) or phospho-Glu-tRNA(Gln). This Staphylococcus carnosus (strain TM300) protein is Aspartyl/glutamyl-tRNA(Asn/Gln) amidotransferase subunit C.